Reading from the N-terminus, the 768-residue chain is Cullin-3 (768 aa).

S2 is modified (N-acetylserine). The interval 2 to 41 (SNLSKGTGSRKDTKMRIRAFPMTMDEKYVNSIWDLLKNAI) is interaction with KLHL18. S585 carries the phosphoserine modification. Residues 677-698 (VAAKQGESDPERKETRQKVDDD) are disordered. Residues 682–698 (GESDPERKETRQKVDDD) show a composition bias toward basic and acidic residues. Residues 698 to 760 (DRKHEIEAAI…REYLARTPED (63 aa)) enclose the Cullin neddylation domain. A Glycyl lysine isopeptide (Lys-Gly) (interchain with G-Cter in NEDD8) cross-link involves residue K712.

This sequence belongs to the cullin family. Forms neddylation-dependent homodimers. Component of multiple BCR (BTB-CUL3-RBX1) E3 ubiquitin-protein ligase complexes formed of CUL3, RBX1 and a variable BTB domain-containing protein acting as both, adapter to cullin and substrate recognition subunit. The BCR complex may be active as a heterodimeric complex, in which NEDD8, covalently attached to one CUL3 molecule, binds to the C-terminus of a second CUL3 molecule. Interacts with RBX1, RNF7, CYCE and TIP120A/CAND1. Part of the BCR(SPOP) containing SPOP, and of BCR containing homodimeric SPOPL or the heterodimer formed by SPOP and SPOPL. Part of the probable BCR(KLHL9-KLHL13) complex with BTB domain proteins KLHL9 and KLHL13. Part of the BCR(KLHL41) complex containing KLHL41. Component of the BCR(KLHL12) E3 ubiquitin ligase complex, at least composed of CUL3 and KLHL12 and RBX1. Component of the BCR(KLHL3) E3 ubiquitin ligase complex, at least composed of CUL3 and KLHL3 and RBX1. Part of the BCR(ENC1) complex containing ENC1. Part of a complex consisting of BMI1/PCGF4, CUL3 and SPOP. Part of a complex consisting of BRMS1, CUL3 and SPOP. Component of the BCR(KLHL21) E3 ubiquitin ligase complex, at least composed of CUL3, KLHL21 and RBX1. Component of the BCR(KLHL22) E3 ubiquitin ligase complex, at least composed of CUL3, KLHL22 and RBX1. Component of the BCR(KLHL25) E3 ubiquitin ligase complex, at least composed of CUL3, KLHL25 and RBX1. Part of a complex consisting of MACROH2A1, CUL3 and SPOP. Component of the BCR(KLHL42) E3 ubiquitin ligase complex, at least composed of CUL3 and KLHL42. Component of the BCR(KBTBD8) E3 ubiquitin ligase complex, at least composed of CUL3, KBTBD8 and RBX1. Interacts with KLHL42 (via the BTB domain). Interacts with KATNA1; the interaction is enhanced by KLHL42. Interacts with KCTD5, KLHL9, KLHL11, KLHL13, GAN, ZBTB16, KLHL3, KLHL15, KLHL20, KLHL36, GMCL2, BTBD1. Part of a complex that contains CUL3, RBX1 and GAN. Interacts (via BTB domain) with KLHL17; the interaction regulates surface GRIK2 expression. Interacts with KCTD7. Part of the BCR(GAN) complex containing GAN. Part of the BCR(KEAP1) complex containing KEAP1. vInteracts with KLHL10. Interacts with KAT5 and ATF2. Interacts with KCTD17 in the BCR(KCTD17) E3 ubiquitin ligase complex, at least composed of CUL3, KCTD17 and RBX1. Interacts (when neddylated) with ARIH1; leading to activate the E3 ligase activity of ARIH1. Interacts with COPS9. Interacts with PPP2R5B; this interaction is indirect and mediated through KLHL15-binding and leads to PPP2R5B proteasomal degradation. Interacts with RBBP8/CtIP; this interaction is indirect and mediated through KLHL15-binding and leads to RBBP8 proteasomal degradation. Interacts with KLHL24 in the BCR(KLHL24) E3 ubiquitin ligase complex, composed of CUL3, RBX1 and KLHL24. Interacts with RHOBTB2. Interacts (via BTB domain) with KLHL17; the interaction regulates surface GRIK2 expression. Interacts with AURKA and KLHL18 (via BTB domain). Interacts (unneddylated form) with DCUN1D1, DCUN1D2, DCUN1D3, DCUN1D4 and DCUN1D5; these interactions promote the cullin neddylation. Component of a BCR3 (BTB-CUL3-RBX1) E3 ubiquitin ligase complex, also named Cul3-RING ubiquitin ligase complex CUL3(KBTBD6/7), composed of CUL3, RBX1, KBTBD6 and KBTBD7. Component of the BCR(KBTBD2) E3 ubiquitin ligase complex, at least composed of CUL3, KBTBD2 and RBX1. Interacts with KBTBD2 (via the BTB domain). Component of the BCR(KBTBD4) E3 ubiquitin ligase complex, at least composed of CUL3, KBTBD4 and RBX1. Neddylated. Attachment of NEDD8 is required for the E3 ubiquitin-protein ligase activity of the BCR complex. Deneddylated via its interaction with the COP9 signalosome (CSN) complex.

Its subcellular location is the nucleus. The protein resides in the golgi apparatus. It localises to the cell projection. It is found in the cilium. The protein localises to the flagellum. Its subcellular location is the cytoplasm. The protein resides in the cytoskeleton. It localises to the spindle. It is found in the microtubule organizing center. The protein localises to the centrosome. Its subcellular location is the spindle pole. It functions in the pathway protein modification; protein ubiquitination. In terms of biological role, core component of multiple cullin-RING-based BCR (BTB-CUL3-RBX1) E3 ubiquitin-protein ligase complexes which mediate the ubiquitination and subsequent proteasomal degradation of target proteins. BCR complexes and ARIH1 collaborate in tandem to mediate ubiquitination of target proteins. As a scaffold protein may contribute to catalysis through positioning of the substrate and the ubiquitin-conjugating enzyme. The E3 ubiquitin-protein ligase activity of the complex is dependent on the neddylation of the cullin subunit and is inhibited by the association of the deneddylated cullin subunit with TIP120A/CAND1. The functional specificity of the BCR complex depends on the BTB domain-containing protein as the substrate recognition component. BCR(KLHL42) is involved in ubiquitination of KATNA1. BCR(SPOP) is involved in ubiquitination of BMI1/PCGF4, BRMS1, MACROH2A1 and DAXX, GLI2 and GLI3. Can also form a cullin-RING-based BCR (BTB-CUL3-RBX1) E3 ubiquitin-protein ligase complex containing homodimeric SPOPL or the heterodimer formed by SPOP and SPOPL; these complexes have lower ubiquitin ligase activity. BCR(KLHL9-KLHL13) controls the dynamic behavior of AURKB on mitotic chromosomes and thereby coordinates faithful mitotic progression and completion of cytokinesis. BCR(KLHL12) is involved in ER-Golgi transport by regulating the size of COPII coats, thereby playing a key role in collagen export, which is required for embryonic stem (ES) cells division: BCR(KLHL12) acts by mediating monoubiquitination of SEC31 (SEC31A or SEC31B). BCR(KLHL3) acts as a regulator of ion transport in the distal nephron; by mediating ubiquitination of WNK4. The BCR(KLHL20) E3 ubiquitin ligase complex is involved in interferon response and anterograde Golgi to endosome transport: it mediates both ubiquitination leading to degradation and 'Lys-33'-linked ubiquitination. The BCR(KLHL21) E3 ubiquitin ligase complex regulates localization of the chromosomal passenger complex (CPC) from chromosomes to the spindle midzone in anaphase and mediates the ubiquitination of AURKB. The BCR(KLHL22) ubiquitin ligase complex mediates monoubiquitination of PLK1, leading to PLK1 dissociation from phosphoreceptor proteins and subsequent removal from kinetochores, allowing silencing of the spindle assembly checkpoint (SAC) and chromosome segregation. The BCR(KLHL22) ubiquitin ligase complex is also responsible for the amino acid-stimulated 'Lys-48' polyubiquitination and proteasomal degradation of DEPDC5. Through the degradation of DEPDC5, releases the GATOR1 complex-mediated inhibition of the TORC1 pathway. The BCR(KLHL25) ubiquitin ligase complex is involved in translational homeostasis by mediating ubiquitination and subsequent degradation of hypophosphorylated EIF4EBP1 (4E-BP1). The BCR(KLHL25) ubiquitin ligase complex is also involved in lipid synthesis by mediating ubiquitination and degradation of ACLY. The BCR(KBTBD8) complex acts by mediating monoubiquitination of NOLC1 and TCOF1, leading to remodel the translational program of differentiating cells in favor of neural crest specification. Involved in ubiquitination of cyclin E and of cyclin D1 (in vitro) thus involved in regulation of G1/S transition. Involved in the ubiquitination of KEAP1, ENC1 and KLHL41. In concert with ATF2 and RBX1, promotes degradation of KAT5 thereby attenuating its ability to acetylate and activate ATM. The BCR(KCTD17) E3 ubiquitin ligase complex mediates ubiquitination and degradation of TCHP, a down-regulator of cilium assembly, thereby inducing ciliogenesis. The BCR(KLHL24) E3 ubiquitin ligase complex mediates ubiquitination of KRT14, controls KRT14 levels during keratinocytes differentiation, and is essential for skin integrity. The BCR(KLHL18) E3 ubiquitin ligase complex mediates the ubiquitination of AURKA leading to its activation at the centrosome which is required for initiating mitotic entry. The BCR(KEAP1) E3 ubiquitin ligase complex acts as a key sensor of oxidative and electrophilic stress by mediating ubiquitination and degradation of NFE2L2/NRF2, a transcription factor regulating expression of many cytoprotective genes. As part of the CUL3(KBTBD6/7) E3 ubiquitin ligase complex functions mediates 'Lys-48' ubiquitination and proteasomal degradation of TIAM1. By controlling the ubiquitination of that RAC1 guanine exchange factors (GEF), regulates RAC1 signal transduction and downstream biological processes including the organization of the cytoskeleton, cell migration and cell proliferation. The BCR(KBTBD4) E3 ubiquitin ligase complex targets CoREST corepressor complex components RCOR1, KDM1A/LSD1 and HDAC2 for proteasomal degradation with RCOR1 likely to be the primary target while degradation of KDM1A and HDAC2 is likely due to their association with RCOR1. It also targets RCOR3, MIER2 and MIER3 for proteasomal degradation as well as associated proteins ZNF217 and RREB1 with degradation being dependent on the presence of an ELM2 domain in the target proteins. The BCR(ARMC5) complex mediates premature transcription termination of transcripts that are unfavorably configured for transcriptional elongation by mediating ubiquitination of Pol II subunit POLR2A. Required for 'Lys-63'-linked ubiquitination of large ribosomal subunit protein MRPL12. The chain is Cullin-3 (Cul3) from Rattus norvegicus (Rat).